The sequence spans 403 residues: Tyrosine--tRNA ligase (403 aa).

The 'HIGH' region motif lies at 42-51 (PTAPDLHLGH). Positions 226 to 230 (KMSKS) match the 'KMSKS' region motif. Lys-229 is a binding site for ATP. The S4 RNA-binding domain maps to 339–400 (LRIASLLTAA…GKRNFARVSL (62 aa)).

It belongs to the class-I aminoacyl-tRNA synthetase family. TyrS type 2 subfamily. Homodimer.

It localises to the cytoplasm. The enzyme catalyses tRNA(Tyr) + L-tyrosine + ATP = L-tyrosyl-tRNA(Tyr) + AMP + diphosphate + H(+). Its function is as follows. Catalyzes the attachment of tyrosine to tRNA(Tyr) in a two-step reaction: tyrosine is first activated by ATP to form Tyr-AMP and then transferred to the acceptor end of tRNA(Tyr). This chain is Tyrosine--tRNA ligase, found in Xanthomonas oryzae pv. oryzae (strain MAFF 311018).